The sequence spans 35 residues: Coenzyme PQQ synthesis protein A (35 aa).

A cross-link (pyrroloquinoline quinone (Glu-Tyr)) is located at residues 16 to 20 (EINMY).

The protein belongs to the PqqA family.

The protein operates within cofactor biosynthesis; pyrroloquinoline quinone biosynthesis. Required for coenzyme pyrroloquinoline quinone (PQQ) biosynthesis. PQQ is probably formed by cross-linking a specific glutamate to a specific tyrosine residue and excising these residues from the peptide. This is Coenzyme PQQ synthesis protein A from Ruegeria pomeroyi (strain ATCC 700808 / DSM 15171 / DSS-3) (Silicibacter pomeroyi).